The chain runs to 481 residues: MITIEQLLDILKKDHNFREVLDADGYHYHYQGLSFERLSYDSRQVDGKTLFFAKGATFKADYLKEAITNGLQLYISEVDYELGIPVVLVTDIKKAMSLIAMAFYGNPQEKLKLLAFTGTKGKTTAAYFAYHMLKESYKPAMFSTMNTTLDGKTFFKSQLTTPESLDLFAMMAECVTNGMTHLIMEVSSQAYLVDRVYGLTFDVGVFLNISPDHIGPIEHPTFEDYFYHKRLLMENSRAVVINSGMDHFSFLADQVADQEHMFYGPLSDNQITTSQAFSFEAKGQLAGHYDIQLIGHFNQENAMAAGLACLRLGASLADIQKGIAKTRVPGRMEVLTMTNHAKVFVDYAHNGDSLEKLLSVVEEHQTGKLMLILGAPGNKGESRRADFGRVIHQHPNLTVILTADDPNFEDPEDISQEIASHIARPVEIISDREQAIQKAMSLCQGAKDAVIIAGKGADAYQIVKGQQVAYAGDLAIAKHYL.

Residue S42 coordinates UDP-N-acetyl-alpha-D-muramoyl-L-alanyl-D-glutamate. ATP is bound at residue 118–124 (GTKGKTT). UDP-N-acetyl-alpha-D-muramoyl-L-alanyl-D-glutamate is bound by residues Q158, 160–161 (TT), S187, and R195. K229 is subject to N6-carboxylysine. The L-lysine recognition motif signature appears at 404-407 (DDPN).

This sequence belongs to the MurCDEF family. MurE subfamily. Post-translationally, carboxylation is probably crucial for Mg(2+) binding and, consequently, for the gamma-phosphate positioning of ATP.

It localises to the cytoplasm. It catalyses the reaction UDP-N-acetyl-alpha-D-muramoyl-L-alanyl-D-glutamate + L-lysine + ATP = UDP-N-acetyl-alpha-D-muramoyl-L-alanyl-gamma-D-glutamyl-L-lysine + ADP + phosphate + H(+). It participates in cell wall biogenesis; peptidoglycan biosynthesis. Its function is as follows. Catalyzes the addition of L-lysine to the nucleotide precursor UDP-N-acetylmuramoyl-L-alanyl-D-glutamate (UMAG) in the biosynthesis of bacterial cell-wall peptidoglycan. The sequence is that of UDP-N-acetylmuramoyl-L-alanyl-D-glutamate--L-lysine ligase from Streptococcus pyogenes serotype M6 (strain ATCC BAA-946 / MGAS10394).